The chain runs to 477 residues: Iroquois homeobox protein 6a (477 aa).

A DNA-binding region (homeobox) is located at residues 148 to 210; that stretch reads GSTRRKNATR…NARRRLKKEN (63 aa). Disordered stretches follow at residues 209-282 and 303-323; these read ENKM…PDIP and DYLD…QSTS. Residues 219–237 show a composition bias toward basic and acidic residues; the sequence is KAGDDRKEDLDSKDSKDEQ. The segment covering 243 to 253 has biased composition (acidic residues); the sequence is DLDDMEDEDCD. Residues 254 to 264 show a composition bias toward basic and acidic residues; that stretch reads KLDSDCEKSGQ. The segment covering 310–321 has biased composition (low complexity); the sequence is SKPQQQQPSPQS.

It belongs to the TALE/IRO homeobox family.

The protein resides in the nucleus. Functionally, transcription factor. Binds to the iroquois binding site (IBS) motif of target genes to regulate gene expression; functions as a transcriptional activator or repressor. In concert with irx5a, plays a role in visual performance. The sequence is that of Iroquois homeobox protein 6a from Danio rerio (Zebrafish).